The chain runs to 297 residues: Putative thiosulfate sulfurtransferase SseA (297 aa).

Rhodanese domains lie at glycine 31 to leucine 138 and isoleucine 168 to valine 286. Cysteine 245 serves as the catalytic Cysteine persulfide intermediate. Position 250 (arginine 250) interacts with substrate.

It carries out the reaction thiosulfate + hydrogen cyanide = thiocyanate + sulfite + 2 H(+). The chain is Putative thiosulfate sulfurtransferase SseA (sseA) from Mycobacterium bovis (strain ATCC BAA-935 / AF2122/97).